Consider the following 355-residue polypeptide: Uroporphyrinogen decarboxylase (355 aa).

Substrate contacts are provided by residues R36 to R40, D85, Y160, S215, and H334.

It belongs to the uroporphyrinogen decarboxylase family. In terms of assembly, homodimer.

Its subcellular location is the cytoplasm. It catalyses the reaction uroporphyrinogen III + 4 H(+) = coproporphyrinogen III + 4 CO2. It functions in the pathway porphyrin-containing compound metabolism; protoporphyrin-IX biosynthesis; coproporphyrinogen-III from 5-aminolevulinate: step 4/4. In terms of biological role, catalyzes the decarboxylation of four acetate groups of uroporphyrinogen-III to yield coproporphyrinogen-III. The chain is Uroporphyrinogen decarboxylase from Rhodococcus opacus (strain B4).